Reading from the N-terminus, the 96-residue chain is Phosphoribosyl-ATP pyrophosphatase (96 aa).

This sequence belongs to the PRA-PH family.

It is found in the cytoplasm. The enzyme catalyses 1-(5-phospho-beta-D-ribosyl)-ATP + H2O = 1-(5-phospho-beta-D-ribosyl)-5'-AMP + diphosphate + H(+). It participates in amino-acid biosynthesis; L-histidine biosynthesis; L-histidine from 5-phospho-alpha-D-ribose 1-diphosphate: step 2/9. This Methanococcus aeolicus (strain ATCC BAA-1280 / DSM 17508 / OCM 812 / Nankai-3) protein is Phosphoribosyl-ATP pyrophosphatase.